Reading from the N-terminus, the 355-residue chain is Putative early 40.3 kDa protein (355 aa).

This protein is required for viral late gene expression. The chain is Putative early 40.3 kDa protein (DA41) from Orgyia pseudotsugata multicapsid polyhedrosis virus (OpMNPV).